An 822-amino-acid polypeptide reads, in one-letter code: Anaphase-promoting complex subunit 2 (822 aa).

Phosphoserine occurs at positions 218, 314, 470, 534, and 697. A disordered region spans residues 450–495 (GDLAVELSKTDPASLETGQDSEDDSGEPEDWVPDPVDADPGKSSSK). Residues 468–481 (QDSEDDSGEPEDWV) show a composition bias toward acidic residues. The interval 502 to 700 (ISLLVSIYGS…LLRRRMSVWL (199 aa)) is cullin homology. Tyr810 carries the post-translational modification Phosphotyrosine.

The protein belongs to the cullin family. As to quaternary structure, the mammalian APC/C is composed at least of 14 distinct subunits ANAPC1, ANAPC2, CDC27/APC3, ANAPC4, ANAPC5, CDC16/APC6, ANAPC7, CDC23/APC8, ANAPC10, ANAPC11, CDC26/APC12, ANAPC13, ANAPC15 and ANAPC16 that assemble into a complex of at least 19 chains with a combined molecular mass of around 1.2 MDa; APC/C interacts with FZR1 and FBXO5. In the context of the APC/C complex, directly interacts with UBE2C and UBE2S. Interacts (via cullin domain) with ANAPC11 and with UBCH10. Interacts with NEUROD2. Interacts with FBXO43; the interaction is direct.

The protein operates within protein modification; protein ubiquitination. In terms of biological role, together with the RING-H2 protein ANAPC11, constitutes the catalytic component of the anaphase promoting complex/cyclosome (APC/C), a cell cycle-regulated E3 ubiquitin ligase that controls progression through mitosis and the G1 phase of the cell cycle. The APC/C complex acts by mediating ubiquitination and subsequent degradation of target proteins: it mainly mediates the formation of 'Lys-11'-linked polyubiquitin chains and, to a lower extent, the formation of 'Lys-48'- and 'Lys-63'-linked polyubiquitin chains. The APC/C complex catalyzes assembly of branched 'Lys-11'-/'Lys-48'-linked branched ubiquitin chains on target proteins. The CDC20-APC/C complex positively regulates the formation of synaptic vesicle clustering at active zone to the presynaptic membrane in postmitotic neurons. CDC20-APC/C-induced degradation of NEUROD2 drives presynaptic differentiation. This is Anaphase-promoting complex subunit 2 (ANAPC2) from Homo sapiens (Human).